A 200-amino-acid chain; its full sequence is Urease accessory protein UreE (200 aa).

Residues 171–200 are disordered; it reads HHGHAHPHPHDHDHQHGPGCAHGRHGHDHH.

This sequence belongs to the UreE family.

Its subcellular location is the cytoplasm. Involved in urease metallocenter assembly. Binds nickel. Probably functions as a nickel donor during metallocenter assembly. The sequence is that of Urease accessory protein UreE from Burkholderia vietnamiensis (strain G4 / LMG 22486) (Burkholderia cepacia (strain R1808)).